Here is a 372-residue protein sequence, read N- to C-terminus: tRNA-specific 2-thiouridylase MnmA (372 aa).

Residues 16 to 23 (GMSGGVDS) and M42 contribute to the ATP site. The interval 102–104 (NPD) is interaction with target base in tRNA. The Nucleophile role is filled by C107. A disulfide bond links C107 and C205. Position 132 (G132) interacts with ATP. Positions 155–157 (KDQ) are interaction with tRNA. C205 acts as the Cysteine persulfide intermediate in catalysis. An interaction with tRNA region spans residues 317-318 (RY).

Belongs to the MnmA/TRMU family.

It localises to the cytoplasm. It catalyses the reaction S-sulfanyl-L-cysteinyl-[protein] + uridine(34) in tRNA + AH2 + ATP = 2-thiouridine(34) in tRNA + L-cysteinyl-[protein] + A + AMP + diphosphate + H(+). Its function is as follows. Catalyzes the 2-thiolation of uridine at the wobble position (U34) of tRNA, leading to the formation of s(2)U34. In Shewanella baltica (strain OS185), this protein is tRNA-specific 2-thiouridylase MnmA.